The primary structure comprises 111 residues: Small ribosomal subunit protein bS16 (111 aa).

This sequence belongs to the bacterial ribosomal protein bS16 family.

The sequence is that of Small ribosomal subunit protein bS16 from Rickettsia africae (strain ESF-5).